A 450-amino-acid chain; its full sequence is Phosphoglucosamine mutase (450 aa).

Residue Ser101 is the Phosphoserine intermediate of the active site. Positions 101, 241, 243, and 245 each coordinate Mg(2+). Ser101 is modified (phosphoserine).

This sequence belongs to the phosphohexose mutase family. Mg(2+) is required as a cofactor. In terms of processing, activated by phosphorylation.

The catalysed reaction is alpha-D-glucosamine 1-phosphate = D-glucosamine 6-phosphate. Functionally, catalyzes the conversion of glucosamine-6-phosphate to glucosamine-1-phosphate. This is Phosphoglucosamine mutase from Listeria innocua serovar 6a (strain ATCC BAA-680 / CLIP 11262).